Consider the following 526-residue polypeptide: MVKRADAGAIVAQLRVAIAPDDIAITLHHKLCHAARQLLEQTLPAIKHGNILEIAQRENEATCFGRRTPDDSFLEWHKPASVLHNMVRAVADPWPSAFSYVGNQKFTVWSSRVHPHASKAQPGSVISIAPLLIACGDGALEIVTGQAGDGITMQGSQLAQTLGLVQGSRLNSQPACTARRRTRVLILGVNGFIGNHLTERLLREDHYEVYGLDIGSDAISRFLNHPHFHFVEGDISIHSEWIEYHVKKCDVVLPLVAIATPIEYTRNPLRVFELDFEENLRIIRYCVKYRKRIIFPSTSEVYGMCSDKYFDEDHSNLIVGPVNKPRWIYSVSKQLLDRVIWAYGEKEGLQFTLFRPFNWMGPRLDNLNAARIGSSRAITQLILNLVEGSPIKLIDGGKQKRCFTDIRDGIEALYRIIENAGNRCDGEIINIGNPENEASIEELGKMLLASFEKHPLRHHFPPFAGFRVVESSSYYGKGYQDVEHRKPSIRNAHRCLDWEPKIDMQETIDETLDFFLRTVDLTDKPS.

The interval 1–170 (MVKRADAGAI…TLGLVQGSRL (170 aa)) is formyltransferase ArnAFT. Position 2-6 (2-6 (VKRAD)) interacts with (6R)-10-formyltetrahydrofolate. The segment at 180 to 526 (RRTRVLILGV…RTVDLTDKPS (347 aa)) is dehydrogenase ArnADH. Residues aspartate 213 and 234–235 (DI) contribute to the NAD(+) site. UDP-alpha-D-glucuronate contacts are provided by residues alanine 259, tyrosine 264, and 298–299 (TS). The active-site Proton acceptor; for decarboxylase activity is glutamate 300. UDP-alpha-D-glucuronate contacts are provided by residues arginine 326, asparagine 358, 392–401 (KLIDGGKQKR), and tyrosine 479. Arginine 485 acts as the Proton donor; for decarboxylase activity in catalysis.

It in the N-terminal section; belongs to the Fmt family. UDP-L-Ara4N formyltransferase subfamily. The protein in the C-terminal section; belongs to the NAD(P)-dependent epimerase/dehydratase family. UDP-glucuronic acid decarboxylase subfamily. In terms of assembly, homohexamer, formed by a dimer of trimers.

It carries out the reaction UDP-alpha-D-glucuronate + NAD(+) = UDP-beta-L-threo-pentopyranos-4-ulose + CO2 + NADH. The enzyme catalyses UDP-4-amino-4-deoxy-beta-L-arabinose + (6R)-10-formyltetrahydrofolate = UDP-4-deoxy-4-formamido-beta-L-arabinose + (6S)-5,6,7,8-tetrahydrofolate + H(+). Its pathway is nucleotide-sugar biosynthesis; UDP-4-deoxy-4-formamido-beta-L-arabinose biosynthesis; UDP-4-deoxy-4-formamido-beta-L-arabinose from UDP-alpha-D-glucuronate: step 1/3. The protein operates within nucleotide-sugar biosynthesis; UDP-4-deoxy-4-formamido-beta-L-arabinose biosynthesis; UDP-4-deoxy-4-formamido-beta-L-arabinose from UDP-alpha-D-glucuronate: step 3/3. It functions in the pathway bacterial outer membrane biogenesis; lipopolysaccharide biosynthesis. Functionally, bifunctional enzyme that catalyzes the oxidative decarboxylation of UDP-glucuronic acid (UDP-GlcUA) to UDP-4-keto-arabinose (UDP-Ara4O) and the addition of a formyl group to UDP-4-amino-4-deoxy-L-arabinose (UDP-L-Ara4N) to form UDP-L-4-formamido-arabinose (UDP-L-Ara4FN). The modified arabinose is attached to lipid A and is required for resistance to polymyxin and cationic antimicrobial peptides. The sequence is that of Putative bifunctional polymyxin resistance protein ArnA (arnA) from Shigella boydii serotype 18 (strain CDC 3083-94 / BS512).